The sequence spans 231 residues: NADH-ubiquinone oxidoreductase chain 4 (231 aa).

A run of 7 helical transmembrane segments spans residues 1-21 (PIAG…YGII), 34-54 (MFLP…LTCL), 63-85 (IAYS…TPWG), 89-111 (AMAL…NTTY), 128-148 (ILPM…ATPP), 169-189 (TIIL…HMFL), and 211-231 (LLMA…ELII).

Belongs to the complex I subunit 4 family.

It is found in the mitochondrion membrane. It carries out the reaction a ubiquinone + NADH + 5 H(+)(in) = a ubiquinol + NAD(+) + 4 H(+)(out). Core subunit of the mitochondrial membrane respiratory chain NADH dehydrogenase (Complex I) that is believed to belong to the minimal assembly required for catalysis. Complex I functions in the transfer of electrons from NADH to the respiratory chain. The immediate electron acceptor for the enzyme is believed to be ubiquinone. The polypeptide is NADH-ubiquinone oxidoreductase chain 4 (MT-ND4) (Cerrophidion godmani (Porthidium godmani)).